A 248-amino-acid chain; its full sequence is Ribosomal RNA small subunit methyltransferase J (248 aa).

Residues Arg-101–Asp-102, Glu-117–Arg-118, Ser-153–Ser-154, and Asp-171 each bind S-adenosyl-L-methionine.

This sequence belongs to the methyltransferase superfamily. RsmJ family.

It localises to the cytoplasm. It carries out the reaction guanosine(1516) in 16S rRNA + S-adenosyl-L-methionine = N(2)-methylguanosine(1516) in 16S rRNA + S-adenosyl-L-homocysteine + H(+). Specifically methylates the guanosine in position 1516 of 16S rRNA. The sequence is that of Ribosomal RNA small subunit methyltransferase J from Serratia proteamaculans (strain 568).